Reading from the N-terminus, the 479-residue chain is UDP-N-acetylmuramate--L-alanine ligase (479 aa).

128–134 lines the ATP pocket; the sequence is GAHGKTT.

It belongs to the MurCDEF family.

It localises to the cytoplasm. It carries out the reaction UDP-N-acetyl-alpha-D-muramate + L-alanine + ATP = UDP-N-acetyl-alpha-D-muramoyl-L-alanine + ADP + phosphate + H(+). It functions in the pathway cell wall biogenesis; peptidoglycan biosynthesis. Cell wall formation. The sequence is that of UDP-N-acetylmuramate--L-alanine ligase from Psychrobacter cryohalolentis (strain ATCC BAA-1226 / DSM 17306 / VKM B-2378 / K5).